We begin with the raw amino-acid sequence, 77 residues long: MAQQRRGGRRRKVDFIAANHIDYIDYKDVDLLKRFISERGKILPRRVTGTSAKNQRKLTVAIKRARVMGLLPFVAED.

This sequence belongs to the bacterial ribosomal protein bS18 family. In terms of assembly, part of the 30S ribosomal subunit. Forms a tight heterodimer with protein bS6.

Its function is as follows. Binds as a heterodimer with protein bS6 to the central domain of the 16S rRNA, where it helps stabilize the platform of the 30S subunit. This is Small ribosomal subunit protein bS18 from Lactobacillus gasseri (strain ATCC 33323 / DSM 20243 / BCRC 14619 / CIP 102991 / JCM 1131 / KCTC 3163 / NCIMB 11718 / NCTC 13722 / AM63).